The chain runs to 468 residues: MTKSLPKDFIFGGATAAYQAEGATHTDGKGPVAWDKYLEDNYWYTAEPASDFYHKYPVDLKLAEEYGVNGIRISIAWSRIFPTGYGEVNPKGVEFYHNLFAECHKRHVEPFVTLHHFDTPEALHSNGDFLNRDNIEHFVDYAAFCFEEFPEVRYWTTFNEIGPIGDGQYLVGKFPPGIQYDLAKVFQSHHNMMVSHARAVKLYKDKGYKGEIGVVHALPTKYPYDPENPADVRAAELEDIIHNKFILDATYLGHYSDVTLAGVNHILKVNGGQLDLRDEDFAALEAAKDLNDFLGINYYMSDWMRDFDGETEIIHNGKGEKGSSKYQIKGVGRRESPTHIPKTDWDWIIYPQGLYDQIMRIKKDYPNYKKIYITENGLGYKDEFVDNTVYDDARIDYVKQHLEVLSDAIADGANVKGYFIWSLMDVFSWSNGYEKRYGLFYVDFETQERYPKKSAHWYRRLAETQMIE.

D-galactose 6-phosphate-binding residues include Gln19, His116, Asn159, Glu160, and Asn297. Glu160 (proton donor) is an active-site residue. Residue Glu375 is the Nucleophile of the active site. Positions 428, 429, 435, and 437 each coordinate D-galactose 6-phosphate.

It belongs to the glycosyl hydrolase 1 family.

It carries out the reaction a 6-phospho-beta-D-galactoside + H2O = D-galactose 6-phosphate + an alcohol. It participates in carbohydrate metabolism; lactose degradation; D-galactose 6-phosphate and beta-D-glucose from lactose 6-phosphate: step 1/1. The sequence is that of 6-phospho-beta-galactosidase from Streptococcus gordonii (strain Challis / ATCC 35105 / BCRC 15272 / CH1 / DL1 / V288).